We begin with the raw amino-acid sequence, 436 residues long: UDP-N-acetylmuramate--L-alanine ligase (436 aa).

108-114 (GAHGKTS) provides a ligand contact to ATP.

The protein belongs to the MurCDEF family.

The protein resides in the cytoplasm. It carries out the reaction UDP-N-acetyl-alpha-D-muramate + L-alanine + ATP = UDP-N-acetyl-alpha-D-muramoyl-L-alanine + ADP + phosphate + H(+). Its pathway is cell wall biogenesis; peptidoglycan biosynthesis. Functionally, cell wall formation. The protein is UDP-N-acetylmuramate--L-alanine ligase of Bacillus cytotoxicus (strain DSM 22905 / CIP 110041 / 391-98 / NVH 391-98).